A 38-amino-acid chain; its full sequence is Kappa-actitoxin-Bcs3a (38 aa).

One can recognise a ShKT domain in the interval 2–37 (CIDRFPTGTCKHVKKGGSCKNSQKYRINCAKTCGLC). 3 disulfide bridges follow: Cys2–Cys37, Cys11–Cys30, and Cys20–Cys34. The segment at 25–26 (KY) is crucial for binding to potassium channels.

It belongs to the sea anemone type 1 potassium channel toxin family. Type 1b subfamily.

The protein localises to the secreted. The protein resides in the nematocyst. Inhibits voltage-gated potassium channels (IC(50)=405.0 nM for rKCNA1/Kv1.1, IC(50)=0.03 nM for rKCNA2/Kv1.2, IC(50)=1.31 nM for rKCNA6/Kv1.6, IC(50)=74.11 nM for hKCNA3/Kv1.3, and IC(50)=247.69 nM for insect Shaker IR). Binds the Shaker IR channels in a voltage-independent manner. This Bunodosoma caissarum (Sea anemone) protein is Kappa-actitoxin-Bcs3a.